We begin with the raw amino-acid sequence, 381 residues long: Estradiol 17-beta-dehydrogenase 2 (381 aa).

The chain crosses the membrane as a helical; Signal-anchor for type II membrane protein span at residues 4–24 (FASESAWLCLAAAAVLGGTLL). 83–112 (QKAVLVTGADSGFGHGLAKHLDKLGFTVFA) serves as a coordination point for NAD(+). S220 is a binding site for substrate. Y233 serves as the catalytic Proton acceptor.

This sequence belongs to the short-chain dehydrogenases/reductases (SDR) family. Homodimer.

The protein resides in the endoplasmic reticulum membrane. It carries out the reaction 17beta-estradiol + NAD(+) = estrone + NADH + H(+). The catalysed reaction is testosterone + NAD(+) = androst-4-ene-3,17-dione + NADH + H(+). It catalyses the reaction 17beta-hydroxy-5alpha-androstan-3-one + NAD(+) = 5alpha-androstan-3,17-dione + NADH + H(+). The enzyme catalyses (20S)-hydroxypregn-4-en-3-one + NAD(+) = progesterone + NADH + H(+). In terms of biological role, catalyzes the NAD-dependent oxidation of highly active 17beta-hydroxysteroids, such as estradiol (E2), testosterone (T), and dihydrotestosterone (DHT), to their less active forms and thus regulates the biological potency of these steroids. Oxidizes estradiol to estrone, testosterone to androstenedione, and dihydrotestosterone to 5alpha-androstan-3,17-dione. Also has 20-alpha-HSD activity. This chain is Estradiol 17-beta-dehydrogenase 2 (Hsd17b2), found in Mus musculus (Mouse).